Here is a 303-residue protein sequence, read N- to C-terminus: Probable phytol kinase, chloroplastic (303 aa).

Residues 1–49 (MAAAAAWTGAASPNSLLLSRSPPHAAALAPSPGSSMRRRLLLGVGTPAV) constitute a chloroplast transit peptide. The next 6 helical transmembrane spans lie at 98 to 118 (VVHV…SNST), 122 to 144 (YFAA…RLYT), 168 to 188 (YVLV…IGIV), 227 to 247 (FISG…LGYI), 254 to 274 (ALGK…VPVT), and 276 to 296 (VVDD…LLFS).

Belongs to the polyprenol kinase family.

Its subcellular location is the plastid. The protein resides in the chloroplast membrane. The enzyme catalyses phytol + CTP = phytyl phosphate + CDP + H(+). The protein operates within cofactor biosynthesis; tocopherol biosynthesis. Functionally, involved in the activation and reutilization of phytol from chlorophyll degradation in plant metabolism, including tocopherol biosynthesis. Catalyzes the conversion of phytol to phytol monophosphate (PMP). This is Probable phytol kinase, chloroplastic from Zea mays (Maize).